A 260-amino-acid chain; its full sequence is Putative sgc region transcriptional regulator (260 aa).

In terms of domain architecture, HTH deoR-type spans 5–61 (RPDRIKQMLHYLWQHRHLSTQQAMELFGYAEATVRRDFQYIVNQYPGMIRGHGCLDF). The segment at residues 22–41 (LSTQQAMELFGYAEATVRRD) is a DNA-binding region (H-T-H motif).

In terms of biological role, putative transcriptional regulator for the sgcREAQCX region. This chain is Putative sgc region transcriptional regulator (sgcR), found in Escherichia coli (strain K12).